The primary structure comprises 65 residues: Orally active insecticidal peptide-3 (65 aa).

The N-terminal stretch at 1–21 is a signal peptide; the sequence is MKTSVLFAILGLALLFCLSFG. A propeptide spanning residues 22-29 is cleaved from the precursor; that stretch reads VELEETGR. Cystine bridges form between cysteine 31–cysteine 46, cysteine 38–cysteine 51, and cysteine 45–cysteine 58. Proline 62 carries the post-translational modification Proline amide.

The protein belongs to the neurotoxin 10 (Hwtx-1) family. 46 (Jztx-7/10/12) subfamily. Expressed by the venom gland.

The protein resides in the secreted. Its function is as follows. Probable ion channel inhibitor. Shows insecticidal activity when injected into mealworms. The sequence is that of Orally active insecticidal peptide-3 from Selenotypus plumipes (Australian featherleg tarantula).